A 485-amino-acid polypeptide reads, in one-letter code: Glutamyl-tRNA(Gln) amidotransferase subunit A (485 aa).

Residues Lys-79 and Ser-154 each act as charge relay system in the active site. Ser-178 (acyl-ester intermediate) is an active-site residue.

It belongs to the amidase family. GatA subfamily. In terms of assembly, heterotrimer of A, B and C subunits.

It catalyses the reaction L-glutamyl-tRNA(Gln) + L-glutamine + ATP + H2O = L-glutaminyl-tRNA(Gln) + L-glutamate + ADP + phosphate + H(+). Its function is as follows. Allows the formation of correctly charged Gln-tRNA(Gln) through the transamidation of misacylated Glu-tRNA(Gln) in organisms which lack glutaminyl-tRNA synthetase. The reaction takes place in the presence of glutamine and ATP through an activated gamma-phospho-Glu-tRNA(Gln). This Clostridium botulinum (strain Kyoto / Type A2) protein is Glutamyl-tRNA(Gln) amidotransferase subunit A.